The following is a 538-amino-acid chain: Bifunctional purine biosynthesis protein PurH (538 aa).

Residues 8–158 (IPAPDKVQVK…KNHAYVTTLT (151 aa)) enclose the MGS-like domain.

This sequence belongs to the PurH family.

The catalysed reaction is (6R)-10-formyltetrahydrofolate + 5-amino-1-(5-phospho-beta-D-ribosyl)imidazole-4-carboxamide = 5-formamido-1-(5-phospho-D-ribosyl)imidazole-4-carboxamide + (6S)-5,6,7,8-tetrahydrofolate. It carries out the reaction IMP + H2O = 5-formamido-1-(5-phospho-D-ribosyl)imidazole-4-carboxamide. It functions in the pathway purine metabolism; IMP biosynthesis via de novo pathway; 5-formamido-1-(5-phospho-D-ribosyl)imidazole-4-carboxamide from 5-amino-1-(5-phospho-D-ribosyl)imidazole-4-carboxamide (10-formyl THF route): step 1/1. The protein operates within purine metabolism; IMP biosynthesis via de novo pathway; IMP from 5-formamido-1-(5-phospho-D-ribosyl)imidazole-4-carboxamide: step 1/1. This chain is Bifunctional purine biosynthesis protein PurH, found in Rhizobium rhizogenes (strain K84 / ATCC BAA-868) (Agrobacterium radiobacter).